A 2784-amino-acid polypeptide reads, in one-letter code: Cilia- and flagella-associated protein 46 (2784 aa).

The TPR 1 repeat unit spans residues 129–162 (GLEVAAANQPRYQFLVYNASVHHWRVVAPLHRDG). A coiled-coil region spans residues 242–268 (TAAAAKLTELQKDVARLQVHLATLAAA). Residues 401–434 (SLAPVVVAAHVKALEQLEDVLTTFTKLADVEGIH) form a TPR 2 repeat. Disordered regions lie at residues 543–562 (SAEP…RSKE) and 581–607 (RDLP…AAAR). Positions 585–595 (HPPPPAPTDPP) are enriched in pro residues. Positions 644–665 (AVDREMVLLQAQLAHYEAEAAI) form a coiled coil. The tract at residues 670-697 (RRRADISPPTRPSPPEVDGEGVRQPPAT) is disordered. One copy of the TPR 3 repeat lies at 708–743 (ASVRSMRGAMSVNEPWLTLNNAVQLYNAALPLMQQH). Disordered stretches follow at residues 799-837 (DAGQ…PAYK) and 929-954 (RVNE…KPHG). The span at 802–817 (QELEDDDDEDSLDEDG) shows a compositional bias: acidic residues. Residues 976-1009 (LELWAKMARAVADAGVWPAALECSAAALAALPGA) form a TPR 4 repeat. The segment covering 1275 to 1288 (TGDLDGDGTDDEDD) has biased composition (acidic residues). 2 disordered regions span residues 1275 to 1351 (TGDL…RVPE) and 1640 to 1673 (AAGG…HGQL). The span at 1298–1311 (SGGGSSSGRAGGGF) shows a compositional bias: gly residues. The segment covering 1646–1658 (GGRESPSPHDDGI) has biased composition (basic and acidic residues). 2 TPR repeats span residues 1712–1745 (HDVW…AADC) and 1854–1886 (MEML…LAAR). Residues 1961-1984 (RLAEVQLAAAEERERLAGADREKA) adopt a coiled-coil conformation. 4 disordered regions span residues 2068–2112 (RPFV…EAAA), 2278–2303 (ATAE…PAAA), 2346–2389 (AAKG…PGAA), and 2441–2465 (LPLP…AGPT). Over residues 2069–2083 (PFVPPPKPPGAPKRP) the composition is skewed to pro residues. Residues 2087 to 2096 (AEEEEDEEGP) are compositionally biased toward acidic residues. Positions 2097 to 2112 (DTAAADAAAEAAEAAA) are enriched in low complexity. Positions 2378–2389 (SKQGPKSGPGAA) are enriched in low complexity. The segment covering 2450–2461 (DGKKEKKDKKEA) has biased composition (basic and acidic residues). The TPR 7 repeat unit spans residues 2613-2646 (ATGGPCTGLLFLGVGRFAAHVPPAVLASAPLGGC).

Belongs to the CFAP46 family. Part of the PDCP1 complex composed of CFAP46, CFAP54, CFAP74 and CFAP221; the PDCP1 complex binds calmodulin.

The protein resides in the cytoplasm. Its subcellular location is the cytoskeleton. The protein localises to the cilium axoneme. Functionally, as part of the central apparatus of the cilium axoneme plays a role in cilium movement and thereby cell motility. The sequence is that of Cilia- and flagella-associated protein 46 from Chlamydomonas reinhardtii (Chlamydomonas smithii).